Reading from the N-terminus, the 270-residue chain is Large ribosomal subunit protein uL10 (270 aa).

Residues 234–270 (VTELEAGKTRPKREGNRRQAMNGDEMDEDQSSDEDSD) form a disordered region. A compositionally biased stretch (basic and acidic residues) spans 238–250 (EAGKTRPKREGNR). Over residues 257 to 270 (DEMDEDQSSDEDSD) the composition is skewed to acidic residues.

This sequence belongs to the universal ribosomal protein uL10 family. Associates with the pre-60S ribosomal particle.

The protein resides in the nucleus. Its subcellular location is the nucleolus. It is found in the cytoplasm. Component of the ribosome assembly machinery. Nuclear paralog of the ribosomal protein P0, it binds pre-60S subunits at an early stage of assembly in the nucleolus, and is replaced by P0 in cytoplasmic pre-60S subunits and mature 80S ribosomes. The protein is Large ribosomal subunit protein uL10 of Chaetomium thermophilum (strain DSM 1495 / CBS 144.50 / IMI 039719) (Thermochaetoides thermophila).